The primary structure comprises 409 residues: Multifunctional CCA protein (409 aa).

ATP contacts are provided by Gly-8 and Arg-11. Positions 8 and 11 each coordinate CTP. Residues Asp-21 and Asp-23 each coordinate Mg(2+). Residues Arg-91, Arg-137, and Arg-140 each coordinate ATP. Positions 91, 137, and 140 each coordinate CTP. The 102-residue stretch at 228–329 (TGVHVLSVLE…LELLQSFDVY (102 aa)) folds into the HD domain.

This sequence belongs to the tRNA nucleotidyltransferase/poly(A) polymerase family. Bacterial CCA-adding enzyme type 1 subfamily. Monomer. Can also form homodimers and oligomers. Requires Mg(2+) as cofactor. Ni(2+) is required as a cofactor.

The catalysed reaction is a tRNA precursor + 2 CTP + ATP = a tRNA with a 3' CCA end + 3 diphosphate. The enzyme catalyses a tRNA with a 3' CCA end + 2 CTP + ATP = a tRNA with a 3' CCACCA end + 3 diphosphate. In terms of biological role, catalyzes the addition and repair of the essential 3'-terminal CCA sequence in tRNAs without using a nucleic acid template. Adds these three nucleotides in the order of C, C, and A to the tRNA nucleotide-73, using CTP and ATP as substrates and producing inorganic pyrophosphate. tRNA 3'-terminal CCA addition is required both for tRNA processing and repair. Also involved in tRNA surveillance by mediating tandem CCA addition to generate a CCACCA at the 3' terminus of unstable tRNAs. While stable tRNAs receive only 3'-terminal CCA, unstable tRNAs are marked with CCACCA and rapidly degraded. The chain is Multifunctional CCA protein from Pseudomonas savastanoi pv. phaseolicola (strain 1448A / Race 6) (Pseudomonas syringae pv. phaseolicola (strain 1448A / Race 6)).